The following is a 20-amino-acid chain: T cell receptor alpha joining 42 (20 aa).

The disordered stretch occupies residues 1–20 (YGGSQGNLIFGKGTKLSVKP).

In terms of assembly, alpha-beta TR is a heterodimer composed of an alpha and beta chain; disulfide-linked. The alpha-beta TR is associated with the transmembrane signaling CD3 coreceptor proteins to form the TR-CD3 (TcR or TCR). The assembly of alpha-beta TR heterodimers with CD3 occurs in the endoplasmic reticulum where a single alpha-beta TR heterodimer associates with one CD3D-CD3E heterodimer, one CD3G-CD3E heterodimer and one CD247 homodimer forming a stable octameric structure. CD3D-CD3E and CD3G-CD3E heterodimers preferentially associate with TR alpha and TR beta chains, respectively. The association of the CD247 homodimer is the last step of TcR assembly in the endoplasmic reticulum and is required for transport to the cell surface.

The protein localises to the cell membrane. J region of the variable domain of T cell receptor (TR) alpha chain that participates in the antigen recognition. Alpha-beta T cell receptors are antigen specific receptors which are essential to the immune response and are present on the cell surface of T lymphocytes. Recognize peptide-major histocompatibility (MH) (pMH) complexes that are displayed by antigen presenting cells (APC), a prerequisite for efficient T cell adaptive immunity against pathogens. Binding of alpha-beta TR to pMH complex initiates TR-CD3 clustering on the cell surface and intracellular activation of LCK that phosphorylates the ITAM motifs of CD3G, CD3D, CD3E and CD247 enabling the recruitment of ZAP70. In turn, ZAP70 phosphorylates LAT, which recruits numerous signaling molecules to form the LAT signalosome. The LAT signalosome propagates signal branching to three major signaling pathways, the calcium, the mitogen-activated protein kinase (MAPK) kinase and the nuclear factor NF-kappa-B (NF-kB) pathways, leading to the mobilization of transcription factors that are critical for gene expression and essential for T cell growth and differentiation. The T cell repertoire is generated in the thymus, by V-(D)-J rearrangement. This repertoire is then shaped by intrathymic selection events to generate a peripheral T cell pool of self-MH restricted, non-autoaggressive T cells. Post-thymic interaction of alpha-beta TR with the pMH complexes shapes TR structural and functional avidity. This is T cell receptor alpha joining 42 from Homo sapiens (Human).